The sequence spans 879 residues: Phosphoenolpyruvate carboxylase (879 aa).

Active-site residues include His138 and Lys546.

Belongs to the PEPCase type 1 family. It depends on Mg(2+) as a cofactor.

It carries out the reaction oxaloacetate + phosphate = phosphoenolpyruvate + hydrogencarbonate. Forms oxaloacetate, a four-carbon dicarboxylic acid source for the tricarboxylic acid cycle. This Pectobacterium atrosepticum (strain SCRI 1043 / ATCC BAA-672) (Erwinia carotovora subsp. atroseptica) protein is Phosphoenolpyruvate carboxylase.